A 110-amino-acid chain; its full sequence is Protein RnfH (110 aa).

Residues 86–110 form a disordered region; it reads RQRRVEKSRQEGSVEGRKWLPKDSR. Residues 88–110 show a composition bias toward basic and acidic residues; the sequence is RRVEKSRQEGSVEGRKWLPKDSR.

Belongs to the UPF0125 (RnfH) family.

The chain is Protein RnfH from Paraburkholderia phymatum (strain DSM 17167 / CIP 108236 / LMG 21445 / STM815) (Burkholderia phymatum).